Reading from the N-terminus, the 1063-residue chain is Error-prone DNA polymerase (1063 aa).

Belongs to the DNA polymerase type-C family. DnaE2 subfamily.

It is found in the cytoplasm. The catalysed reaction is DNA(n) + a 2'-deoxyribonucleoside 5'-triphosphate = DNA(n+1) + diphosphate. Functionally, DNA polymerase involved in damage-induced mutagenesis and translesion synthesis (TLS). It is not the major replicative DNA polymerase. The sequence is that of Error-prone DNA polymerase from Burkholderia mallei (strain ATCC 23344).